Consider the following 161-residue polypeptide: Allophycocyanin subunit alpha 1 (161 aa).

At N71 the chain carries N4-methylasparagine. C81 is a (2R,3E)-phycocyanobilin binding site.

Belongs to the phycobiliprotein family. In terms of assembly, heterohexamer of two alpha chains, one alpha-B chain and three beta chains. Contains one covalently linked phycocyanobilin chromophore. The chromophore is added by phycocyanobilin lyase CpcS 1.

It localises to the cellular thylakoid membrane. Its function is as follows. Light-harvesting photosynthetic bile pigment-protein from the phycobiliprotein complex. Allophycocyanin has a maximum absorption at approximately 650 to 653 nanometers. In Nostoc sp. (strain PCC 7120 / SAG 25.82 / UTEX 2576), this protein is Allophycocyanin subunit alpha 1 (apcA1).